Reading from the N-terminus, the 132-residue chain is Intraflagellar transport protein 20 homolog (132 aa).

Residues 70-132 (MKAIGARNLL…EFIDQFIFQK (63 aa)) are IFT57-binding. Residues 74–114 (GARNLLKSIAKQREAQQQQLQALIAEKKMQLERYRVEYEAL) are a coiled coil.

Component of the IFT complex B, at least composed of IFT20, IFT22, IFT25, IFT27, IFT46, IFT52, TRAF3IP1/IFT54, IFT57, IFT74, IFT80, IFT81, and IFT88. Interacts directly with IFT57 and KIF3B/Kinesin II subunit. Interacts with IFT88. Interacts with CEP83. Interacts with SPEF2 (via C-terminus). Interacts with CBL and CBLB. Interacts with TRIP11. Interacts with TTC21A. Interacts with SPATA1. Interacts with USH1G. Interacts with CCDC146. Interacts with CEP78; regulating IFT20 stability and localization. As to expression, expressed in almost all tissues.

It is found in the golgi apparatus. Its subcellular location is the cis-Golgi network. The protein localises to the cytoplasm. It localises to the cytoskeleton. The protein resides in the microtubule organizing center. It is found in the centrosome. Its subcellular location is the centriole. The protein localises to the cilium basal body. It localises to the cell projection. The protein resides in the cilium. It is found in the cytoplasmic vesicle. Its subcellular location is the secretory vesicle. The protein localises to the acrosome. Its function is as follows. Part of intraflagellar transport (IFT) particles involved in ciliary process assembly. May play a role in the trafficking of ciliary membrane proteins from the Golgi complex to the cilium. Regulates the platelet-derived growth factor receptor-alpha (PDGFRA) signaling pathway. Required for protein stability of E3 ubiquitin ligases CBL and CBLB that mediate ubiquitination and internalization of PDGFRA for proper feedback inhibition of PDGFRA signaling. Essential for male fertility. Plays an important role in spermatogenesis, particularly spermiogenesis, when germ cells form flagella. May play a role in the transport of flagellar proteins ODF2 and SPAG16 to build sperm flagella and in the removal of redundant sperm cytoplasm. Also involved in autophagy since it is required for trafficking of ATG16L and the expansion of the autophagic compartment. In Homo sapiens (Human), this protein is Intraflagellar transport protein 20 homolog (IFT20).